Consider the following 86-residue polypeptide: U18-theraphotoxin-Cg1a (86 aa).

Positions 1–20 (KASVLITLAVLGVMFVWTSA) are cleaved as a signal peptide. Positions 21 to 49 (AELEERGSDQRDSPALIKSMAKVFQSEER) are excised as a propeptide. 3 disulfide bridges follow: cysteine 51–cysteine 65, cysteine 58–cysteine 70, and cysteine 64–cysteine 78. A Phenylalanine amide modification is found at phenylalanine 84.

The protein belongs to the neurotoxin 10 (Hwtx-1) family. 47 subfamily. Expressed by the venom gland.

It localises to the secreted. In terms of biological role, inhibits TTX-sensitive and TTX-insensitive sodium currents (IC(50) is 0.6 uM and 0.95 uM respectively) on rat dorsal root ganglion (DRG) neurons. Inhibits muscular subtypes sodium channels Nav1.4/SCN4A and Nav1.5/SCN5A transiently transfected in to HEK293 cells (IC(50) is 5.42 uM and 0.45 uM respectively). Also blocks Kv2.1/KCNB1 potassium channels expressed in X.laevis oocytes with an IC(50) of 604 nM. Injection of the toxin in mice was immediately followed by general ataxia, lack of response to stimuli and semiparalysis. This Chilobrachys guangxiensis (Chinese earth tiger tarantula) protein is U18-theraphotoxin-Cg1a.